Consider the following 832-residue polypeptide: Protein P (832 aa).

The tract at residues 1 to 177 (MPLSYQHFRR…FCGSPYSWEQ (177 aa)) is terminal protein domain (TP). The tract at residues 178 to 335 (DLQHGAESIH…YCLSLIVNLL (158 aa)) is spacer. Disordered regions lie at residues 186–218 (IHQQSSGILSRPPVGSSLQSKHRKSRLGLQSQQ) and 239–266 (TARRPFGVEPSGSGHTTHRASKSASCLY). The polymerase/reverse transcriptase domain (RT) stretch occupies residues 336–679 (EDWGPCDEYG…YLNLYPVARQ (344 aa)). Positions 346 to 589 (EHHIRIPRTP…YSLHFMGYVI (244 aa)) constitute a Reverse transcriptase domain. Residues D418, D540, and D541 each coordinate Mg(2+).

The protein belongs to the hepadnaviridae P protein family.

It catalyses the reaction DNA(n) + a 2'-deoxyribonucleoside 5'-triphosphate = DNA(n+1) + diphosphate. The catalysed reaction is Endonucleolytic cleavage to 5'-phosphomonoester.. With respect to regulation, activated by host HSP70 and HSP40 in vitro to be able to bind the epsilon loop of the pgRNA. Because deletion of the RNase H region renders the protein partly chaperone-independent, the chaperones may be needed indirectly to relieve occlusion of the RNA-binding site by this domain. Inhibited by several reverse-transcriptase inhibitors: Lamivudine, Adefovir and Entecavir. Functionally, multifunctional enzyme that converts the viral RNA genome into dsDNA in viral cytoplasmic capsids. This enzyme displays a DNA polymerase activity that can copy either DNA or RNA templates, and a ribonuclease H (RNase H) activity that cleaves the RNA strand of RNA-DNA heteroduplexes in a partially processive 3'- to 5'-endonucleasic mode. Neo-synthesized pregenomic RNA (pgRNA) are encapsidated together with the P protein, and reverse-transcribed inside the nucleocapsid. Initiation of reverse-transcription occurs first by binding the epsilon loop on the pgRNA genome, and is initiated by protein priming, thereby the 5'-end of (-)DNA is covalently linked to P protein. Partial (+)DNA is synthesized from the (-)DNA template and generates the relaxed circular DNA (RC-DNA) genome. After budding and infection, the RC-DNA migrates in the nucleus, and is converted into a plasmid-like covalently closed circular DNA (cccDNA). The activity of P protein does not seem to be necessary for cccDNA generation, and is presumably released from (+)DNA by host nuclear DNA repair machinery. The sequence is that of Protein P from Homo sapiens (Human).